The following is a 636-amino-acid chain: Biosynthetic arginine decarboxylase (636 aa).

Position 101 is an N6-(pyridoxal phosphate)lysine (Lys-101). Substrate is bound at residue Phe-286–Tyr-296.

It belongs to the Orn/Lys/Arg decarboxylase class-II family. SpeA subfamily. The cofactor is Mg(2+). Requires pyridoxal 5'-phosphate as cofactor.

It carries out the reaction L-arginine + H(+) = agmatine + CO2. Its pathway is amine and polyamine biosynthesis; agmatine biosynthesis; agmatine from L-arginine: step 1/1. Catalyzes the biosynthesis of agmatine from arginine. This is Biosynthetic arginine decarboxylase from Shewanella frigidimarina (strain NCIMB 400).